The sequence spans 453 residues: Serine/threonine-protein phosphatase 2A 55 kDa regulatory subunit B delta isoform (453 aa).

WD repeat units lie at residues 32 to 71 (AEADIISTVEFNYSGDLLATGDKGGRVVIFQREQENKGRA), 97 to 138 (EIEE…KRAE), 181 to 219 (AHTYHINSISVNSDHETYLSADDLRINLWHLEITDRSFN), and 230 to 270 (ELTE…LCDR). Position 285 is a phosphoserine (Ser-285). WD repeat units lie at residues 289–327 (EIISSISDVKFSHSGRYMMTRDYLSVKVWDLNMEGRPVE), 344–385 (ENDC…DVTL), and 420–452 (DFNKKILHTAWHPMESIIAVAATNNLYIFQDKI). At Tyr-305 the chain carries Phosphotyrosine. A Phosphothreonine modification is found at Thr-308.

It belongs to the phosphatase 2A regulatory subunit B family. In terms of assembly, PP2A consists of a common heterodimeric core enzyme, composed of a 36 kDa catalytic subunit (subunit C) and a 65 kDa constant regulatory subunit (PR65 or subunit A), that associates with a variety of regulatory subunits. Proteins that associate with the core dimer include three families of regulatory subunits B (the R2/B/PR55/B55, R3/B''/PR72/PR130/PR59 and R5/B'/B56 families), the 48 kDa variable regulatory subunit, viral proteins, and cell signaling molecules. Interacts with IER5.

It localises to the cytoplasm. Its function is as follows. Substrate-recognition subunit of protein phosphatase 2A (PP2A) that plays a key role in cell cycle by controlling mitosis entry and exit. Involved in chromosome clustering during late mitosis by mediating dephosphorylation of MKI67. The activity of PP2A complexes containing PPP2R2D (PR55-delta) fluctuate during the cell cycle: the activity is high in interphase and low in mitosis. This is Serine/threonine-protein phosphatase 2A 55 kDa regulatory subunit B delta isoform from Mus musculus (Mouse).